Here is a 457-residue protein sequence, read N- to C-terminus: UDP-N-acetylmuramate--L-alanine ligase (457 aa).

ATP is bound at residue 109 to 115 (GTDGKTT).

Belongs to the MurCDEF family.

The protein resides in the cytoplasm. The enzyme catalyses UDP-N-acetyl-alpha-D-muramate + L-alanine + ATP = UDP-N-acetyl-alpha-D-muramoyl-L-alanine + ADP + phosphate + H(+). The protein operates within cell wall biogenesis; peptidoglycan biosynthesis. In terms of biological role, cell wall formation. This chain is UDP-N-acetylmuramate--L-alanine ligase, found in Thermotoga sp. (strain RQ2).